Here is a 546-residue protein sequence, read N- to C-terminus: Probable protein kinase UbiB (546 aa).

The 379-residue stretch at 124 to 502 folds into the Protein kinase domain; sequence DFEIKPLASA…HVRQGQSRYF (379 aa). ATP contacts are provided by residues 130-138 and K153; that span reads LASASIAQV. D288 functions as the Proton acceptor in the catalytic mechanism. Helical transmembrane passes span 501–521 and 522–542; these read YFLG…VSRP and EWGL…FVGW.

The protein belongs to the ABC1 family. UbiB subfamily.

It is found in the cell inner membrane. Its pathway is cofactor biosynthesis; ubiquinone biosynthesis [regulation]. Its function is as follows. Is probably a protein kinase regulator of UbiI activity which is involved in aerobic coenzyme Q (ubiquinone) biosynthesis. This Escherichia coli O45:K1 (strain S88 / ExPEC) protein is Probable protein kinase UbiB.